The chain runs to 379 residues: RIB43A-like with coiled-coils protein 1 (379 aa).

The disordered stretch occupies residues Met-1–Asn-21. The span at Thr-8 to Asn-21 shows a compositional bias: basic and acidic residues. 2 coiled-coil regions span residues Lys-82–Phe-111 and Asn-216–Lys-304.

Belongs to the RIB43A family. Microtubule inner protein component of sperm flagellar doublet microtubules.

It is found in the cytoplasm. It localises to the cytoskeleton. Its subcellular location is the flagellum axoneme. The chain is RIB43A-like with coiled-coils protein 1 (RIBC1) from Homo sapiens (Human).